Consider the following 183-residue polypeptide: Protein jagunal homolog 1 (183 aa).

Residues 1–39 (MASRAGPRAAGTDGSDFQHRERVAMHYQMSVTLKYEIKK) are Cytoplasmic-facing. Phosphoserine is present on S3. A helical transmembrane segment spans residues 40–60 (LIYVHLVIWLLLVAKMSVGHL). Over 61 to 71 (RLLSHDQVAMP) the chain is Lumenal. A helical membrane pass occupies residues 72 to 92 (YQWEYPYLLSIVPSVLGLLSF). The Cytoplasmic segment spans residues 93–96 (PRNN). Residues 97 to 117 (ISYLVLSMISMGLFSIAPLIY) form a helical membrane-spanning segment. Residues 118–137 (GSMEMFPAAQQLYRHGKAYR) are Lumenal-facing. A helical transmembrane segment spans residues 138-158 (FLFGFSAVSVMYLVLVLAVQV). Topologically, residues 159–183 (HAWQLYYSKKLLDSWFTSTQEKKRK) are cytoplasmic.

Belongs to the jagunal family. As to quaternary structure, interacts with COPA, COPB2 and COPG2.

It localises to the endoplasmic reticulum membrane. Its function is as follows. Endoplasmic reticulum transmembrane protein involved in vesicle-mediated transport, which is required for neutrophil function. Required for vesicle-mediated transport; it is however unclear whether it is involved in early secretory pathway or intracellular protein transport. Acts as a regulator of neutrophil function, probably via its role in vesicle-mediated transport: required for defense against fungal pathogens and for granulocyte colony-stimulating factor (GM-CSF) signaling pathway; possibly by regulating glycosylation and/or targeting of proteins contributing to the viability and migration of neutrophils. The protein is Protein jagunal homolog 1 of Mus musculus (Mouse).